A 160-amino-acid polypeptide reads, in one-letter code: Troponin C, skeletal muscle (160 aa).

An N-acetylthreonine modification is found at Thr-2. 4 consecutive EF-hand domains span residues 15 to 50, 51 to 86, 91 to 126, and 127 to 160; these read EMIAEFKAAFDMFDADGGGDISVKELGTVMRMLGQT, PTKEELDAIIEEVDEDGSGTIDFEEFLVMMVRQMKE, KSEEELAECFRIFDRNADGYIDPEELAEIFRASGEH, and VTDEEIESLMKDGDKNNDGRIDFDEFLKMMEGVQ. Ca(2+) is bound by residues Asp-28, Asp-30, Asp-34, Glu-39, Asp-64, Asp-66, Ser-68, Thr-70, Glu-75, Asp-104, Asn-106, Asp-108, Tyr-110, Glu-115, Asp-140, Asn-142, Asp-144, Arg-146, and Glu-151.

The protein belongs to the troponin C family.

In terms of biological role, troponin is the central regulatory protein of striated muscle contraction. Tn consists of three components: Tn-I which is the inhibitor of actomyosin ATPase, Tn-T which contains the binding site for tropomyosin and Tn-C. The binding of calcium to Tn-C abolishes the inhibitory action of Tn on actin filaments. The sequence is that of Troponin C, skeletal muscle (TNNC2) from Homo sapiens (Human).